We begin with the raw amino-acid sequence, 562 residues long: NAD-dependent malic enzyme (562 aa).

The Proton donor role is filled by tyrosine 101. An NAD(+)-binding site is contributed by arginine 154. Lysine 172 functions as the Proton acceptor in the catalytic mechanism. 3 residues coordinate a divalent metal cation: glutamate 243, aspartate 244, and aspartate 267. Aspartate 267 and asparagine 415 together coordinate NAD(+).

Belongs to the malic enzymes family. As to quaternary structure, homotetramer. Mg(2+) serves as cofactor. It depends on Mn(2+) as a cofactor.

It catalyses the reaction (S)-malate + NAD(+) = pyruvate + CO2 + NADH. The enzyme catalyses oxaloacetate + H(+) = pyruvate + CO2. In Shewanella denitrificans (strain OS217 / ATCC BAA-1090 / DSM 15013), this protein is NAD-dependent malic enzyme.